Consider the following 513-residue polypeptide: uncharacterized protein (513 aa).

The 59-residue stretch at 3–61 (NLKIGQKLQLEIERMGINGEGIGVISGRLVFIPYALPGEEVLVEITENARNFSRAKLVK) folds into the TRAM domain. Residues Q309, Y338, D359, and D407 each contribute to the S-adenosyl-L-methionine site. The active-site Nucleophile is the C434.

The protein belongs to the class I-like SAM-binding methyltransferase superfamily. RNA M5U methyltransferase family.

This is an uncharacterized protein from Lactococcus lactis subsp. lactis (strain IL1403) (Streptococcus lactis).